The following is a 37-amino-acid chain: Large ribosomal subunit protein bL36 (37 aa).

This sequence belongs to the bacterial ribosomal protein bL36 family.

The protein is Large ribosomal subunit protein bL36 of Treponema pallidum (strain Nichols).